The following is a 507-amino-acid chain: Mandelamide hydrolase (507 aa).

Catalysis depends on charge relay system residues Lys-100 and Ser-180. Ser-204 serves as the catalytic Acyl-ester intermediate.

In terms of assembly, monomer.

The enzyme catalyses (R)-mandelamide + H2O = (R)-mandelate + NH4(+). Its activity is regulated as follows. Inhibited by 3,4-dichloroisocoumarin and PMSF. Its function is as follows. Hydrolyzes both the R- and the S-enantiomers of mandelamide, and phenylacetamide. Has lower activity on 3-phenylpropionaide and lactamide. Does not hydrolyze benzamide. Hydrolyzes esters and amides with little steric bulk. Preferentially hydrolyzes aromatic substrates. In Pseudomonas putida (Arthrobacter siderocapsulatus), this protein is Mandelamide hydrolase.